The following is a 60-amino-acid chain: Sec-independent protein translocase protein TatA (60 aa).

Residues 1–21 traverse the membrane as a helical segment; the sequence is MLSNIGVPGLILILVIALVIF.

It belongs to the TatA/E family. In terms of assembly, forms a complex with TatC.

It is found in the cell membrane. Part of the twin-arginine translocation (Tat) system that transports large folded proteins containing a characteristic twin-arginine motif in their signal peptide across membranes. TatA could form the protein-conducting channel of the Tat system. The chain is Sec-independent protein translocase protein TatA from Anoxybacillus flavithermus (strain DSM 21510 / WK1).